Consider the following 247-residue polypeptide: Cell division protein ZapD (247 aa).

The protein belongs to the ZapD family. In terms of assembly, interacts with FtsZ.

It localises to the cytoplasm. Cell division factor that enhances FtsZ-ring assembly. Directly interacts with FtsZ and promotes bundling of FtsZ protofilaments, with a reduction in FtsZ GTPase activity. The protein is Cell division protein ZapD of Salmonella agona (strain SL483).